Reading from the N-terminus, the 604-residue chain is Sulfite reductase [NADPH] flavoprotein alpha-component (604 aa).

The region spanning 68 to 206 (LSIIFASQTG…PAAEWRKQAL (139 aa)) is the Flavodoxin-like domain. Residues 74 to 79 (SQTGNA), 121 to 124 (STNG), and 157 to 166 (LGDSSYEFFC) each bind FMN. Residues 239-453 (QNPYTATLLT…VEHNNNFKLP (215 aa)) form the FAD-binding FR-type domain. FAD is bound by residues Thr-327, Gly-361, 391-394 (RLYS), 409-411 (TVG), Tyr-415, and 424-427 (GGAS). NADP(+) is bound by residues 524–525 (SR), 530–534 (KVYVQ), and Asp-566. Tyr-604 contacts FAD.

The protein belongs to the NADPH-dependent sulphite reductase flavoprotein subunit CysJ family. This sequence in the N-terminal section; belongs to the flavodoxin family. In the C-terminal section; belongs to the flavoprotein pyridine nucleotide cytochrome reductase family. As to quaternary structure, alpha(8)-beta(8). The alpha component is a flavoprotein, the beta component is a hemoprotein. FAD is required as a cofactor. The cofactor is FMN.

The catalysed reaction is hydrogen sulfide + 3 NADP(+) + 3 H2O = sulfite + 3 NADPH + 4 H(+). It functions in the pathway sulfur metabolism; hydrogen sulfide biosynthesis; hydrogen sulfide from sulfite (NADPH route): step 1/1. Its function is as follows. Component of the sulfite reductase complex that catalyzes the 6-electron reduction of sulfite to sulfide. This is one of several activities required for the biosynthesis of L-cysteine from sulfate. The flavoprotein component catalyzes the electron flow from NADPH -&gt; FAD -&gt; FMN to the hemoprotein component. In Aliivibrio fischeri (strain ATCC 700601 / ES114) (Vibrio fischeri), this protein is Sulfite reductase [NADPH] flavoprotein alpha-component.